The sequence spans 342 residues: Terpene cyclase resF (342 aa).

Helical transmembrane passes span 5–25, 81–101, 115–135, 151–171, and 182–202; these read VSVV…GVFA, FMAQ…TEDF, WGVF…GVCF, STWI…MLIF, and IWGV…ASLL. N224 carries an N-linked (GlcNAc...) asparagine glycan. Helical transmembrane passes span 229–249, 269–289, and 305–325; these read YVVA…FHLG, FLQI…WHEL, and YLLL…AWAL.

The protein belongs to the membrane-bound ascI terpene cyclase family.

Its subcellular location is the membrane. It functions in the pathway antifungal biosynthesis. Its function is as follows. Cyclase; part of the gene cluster that mediates the biosynthesis of the tetrahydropyranyl antifungal agent restricticin that acts as an inhibitor of CYP51 and blocks the ergosterol biosynthesis. The highly reducing polyketide synthase resH, the short chain dehydrogenase resG, the cyclase resF, the FAD-dependent monooxygenase resA and the enoylreductase resD are required to generate the first stable intermediate desmethylrestrictinol. ResH with resD biosynthesize the first polyketide chain intermediate that is reduced by resG, followed by epoxidation by resA before 6-endo cyclization via epoxide opening by resF leads to desmethylrestrictinol. The methyltransferase resE then catalyzes the C4 O-methylation of desmethylrestrictinol to produce restrictinol, and the nonribosomal peptide synthetase resC catalyzes the C3 esterification of restrictinol with glycine that leads to restricticin. The sequence is that of Terpene cyclase resF from Aspergillus sclerotiorum.